We begin with the raw amino-acid sequence, 266 residues long: Putative deoxyribonuclease tatdn3 (266 aa).

Zn(2+) contacts are provided by His9, His11, Glu103, His143, His166, and Asp214.

Belongs to the metallo-dependent hydrolases superfamily. TatD-type hydrolase family. Mn(2+) is required as a cofactor. It depends on Ca(2+) as a cofactor. Mg(2+) serves as cofactor. The cofactor is Zn(2+).

It is found in the nucleus. The 3'-exonuclease activity is sensitive to the metal ion present in the active site, whereas the AP endodeoxyribonuclease activity is observed in a variety of divalent metal cofactors. 3'-exoxonuclease activity is suppressed in the presence of Ca(2+), Zn(2+) and Ni(2+). Functionally, exhibits 3'-exonuclease activities and apurinic/apyrimidinic (AP) endonuclease (in vitro). Show preferential AP endonuclease activity on double-stranded DNA substrates and 3'- exonuclease activity on single-stranded DNA. The polypeptide is Putative deoxyribonuclease tatdn3 (tatdn3) (Danio rerio (Zebrafish)).